A 338-amino-acid chain; its full sequence is Taste receptor type 2 member 39 (338 aa).

Topologically, residues 1–30 (MLGRCFPPDTKEKQQLRMTKLCDPAESELS) are extracellular. A helical transmembrane segment spans residues 31 to 51 (PFLITLILAVLLAEYLIGIIA). Residues 52-74 (NGFIMAIHAAEWVQNKAVSTSGR) are Cytoplasmic-facing. A helical membrane pass occupies residues 75-95 (ILVFLSVSRIALQSLMMLEIT). Over 96 to 116 (ISSTSLSFYSEDAVYYAFKIS) the chain is Extracellular. The chain crosses the membrane as a helical span at residues 117–137 (FIFLNFCSLWFAAWLSFFYFV). Residues 138-156 (KIANFSYPLFLKLRWRITG) are Cytoplasmic-facing. The chain crosses the membrane as a helical span at residues 157-177 (LIPWLLWLSVFISFSHSMFCI). Topologically, residues 178-205 (NIXTVYCNNSFPIHSSNSTKKTYLSEIN) are extracellular. 2 N-linked (GlcNAc...) asparagine glycosylation sites follow: N185 and N194. The chain crosses the membrane as a helical span at residues 206-226 (VVGLAFFFNLGIVTPLIMFIL). Residues 227-262 (TATLLILSLKRHTLHMGSNATGSNDPSMEAHMGAIK) lie on the Cytoplasmic side of the membrane. A helical membrane pass occupies residues 263 to 283 (ATSYFLILYIFNAVALFIYLS). Over 284-291 (NMFDINSL) the chain is Extracellular. Residues 292-312 (WNNLCQIIMAAYPASHSILLI) traverse the membrane as a helical segment. The Cytoplasmic portion of the chain corresponds to 313 to 338 (QDNPGLRRAWKRLQLRLHLYPKEWTL).

It belongs to the G-protein coupled receptor T2R family.

Its subcellular location is the membrane. Its function is as follows. Receptor that may play a role in the perception of bitterness and is gustducin-linked. May play a role in sensing the chemical composition of the gastrointestinal content. The activity of this receptor may stimulate alpha gustducin, mediate PLC-beta-2 activation and lead to the gating of TRPM5. The protein is Taste receptor type 2 member 39 (TAS2R39) of Gorilla gorilla gorilla (Western lowland gorilla).